Consider the following 194-residue polypeptide: NADH-quinone oxidoreductase subunit B 1 (194 aa).

The segment covering 1-12 (MGVTPVSNQPLV) has biased composition (polar residues). The disordered stretch occupies residues 1–23 (MGVTPVSNQPLVAQQPKGIIDPS). Positions 73, 74, 138, and 168 each coordinate [4Fe-4S] cluster.

Belongs to the complex I 20 kDa subunit family. As to quaternary structure, NDH-1 is composed of 14 different subunits. Subunits NuoB, C, D, E, F, and G constitute the peripheral sector of the complex. The cofactor is [4Fe-4S] cluster.

Its subcellular location is the cell inner membrane. It carries out the reaction a quinone + NADH + 5 H(+)(in) = a quinol + NAD(+) + 4 H(+)(out). In terms of biological role, NDH-1 shuttles electrons from NADH, via FMN and iron-sulfur (Fe-S) centers, to quinones in the respiratory chain. The immediate electron acceptor for the enzyme in this species is believed to be ubiquinone. Couples the redox reaction to proton translocation (for every two electrons transferred, four hydrogen ions are translocated across the cytoplasmic membrane), and thus conserves the redox energy in a proton gradient. This Rhizobium etli (strain ATCC 51251 / DSM 11541 / JCM 21823 / NBRC 15573 / CFN 42) protein is NADH-quinone oxidoreductase subunit B 1.